A 284-amino-acid chain; its full sequence is Bifunctional protein FolD (284 aa).

NADP(+)-binding positions include 166-168 (GAS) and I232.

It belongs to the tetrahydrofolate dehydrogenase/cyclohydrolase family. In terms of assembly, homodimer.

It carries out the reaction (6R)-5,10-methylene-5,6,7,8-tetrahydrofolate + NADP(+) = (6R)-5,10-methenyltetrahydrofolate + NADPH. The enzyme catalyses (6R)-5,10-methenyltetrahydrofolate + H2O = (6R)-10-formyltetrahydrofolate + H(+). It participates in one-carbon metabolism; tetrahydrofolate interconversion. In terms of biological role, catalyzes the oxidation of 5,10-methylenetetrahydrofolate to 5,10-methenyltetrahydrofolate and then the hydrolysis of 5,10-methenyltetrahydrofolate to 10-formyltetrahydrofolate. This Shewanella sp. (strain ANA-3) protein is Bifunctional protein FolD.